The following is a 313-amino-acid chain: L-lactate dehydrogenase 1 (313 aa).

The NAD(+) site is built by V15, D36, R41, and Y66. Substrate-binding positions include Q83, R89, and 121–124 (NPVD). NAD(+) contacts are provided by residues 119–121 (ASN) and S144. 149 to 152 (DTAR) lines the substrate pocket. Positions 154 and 169 each coordinate beta-D-fructose 1,6-bisphosphate. H176 serves as the catalytic Proton acceptor. A Phosphotyrosine modification is found at Y218. T227 is a substrate binding site.

The protein belongs to the LDH/MDH superfamily. LDH family. In terms of assembly, homotetramer.

It localises to the cytoplasm. The catalysed reaction is (S)-lactate + NAD(+) = pyruvate + NADH + H(+). The protein operates within fermentation; pyruvate fermentation to lactate; (S)-lactate from pyruvate: step 1/1. Allosterically activated by fructose 1,6-bisphosphate (FBP). In terms of biological role, catalyzes the conversion of lactate to pyruvate. This is L-lactate dehydrogenase 1 from Listeria innocua serovar 6a (strain ATCC BAA-680 / CLIP 11262).